The following is a 213-amino-acid chain: High frequency lysogenization protein HflD (213 aa).

Residues 79–126 (QGLNAELTRYTLSLMVLERKLSSAKGALDTLGNRINGLQRQLEHFDLQ) are a coiled coil.

It belongs to the HflD family. As to quaternary structure, interacts with CII protein from phage lambda.

It is found in the cytoplasm. It localises to the cell inner membrane. Functionally, negative regulator of phage lambda lysogenization. Contributes to the degradation of the phage regulatory protein CII. Acts probably by holding CII on the membrane surface, away from the target promoters, but close to the FtsH protease. The protein is High frequency lysogenization protein HflD of Escherichia coli O127:H6 (strain E2348/69 / EPEC).